The chain runs to 745 residues: Catalase-peroxidase (745 aa).

Residues 97–223 (WHSAGTYRTG…LAAVQMGLIY (127 aa)) constitute a cross-link (tryptophyl-tyrosyl-methioninium (Trp-Tyr) (with M-249)). His-98 functions as the Proton acceptor in the catalytic mechanism. Positions 223-249 (YVNPEGPDGSPDPWASARDIRMTFARM) form a cross-link, tryptophyl-tyrosyl-methioninium (Tyr-Met) (with W-97). His-264 contributes to the heme b binding site. Residues 345 to 368 (KQWQPVNPKPEDLAPGAHSPDRRV) are disordered.

This sequence belongs to the peroxidase family. Peroxidase/catalase subfamily. In terms of assembly, homodimer or homotetramer. Heme b serves as cofactor. Formation of the three residue Trp-Tyr-Met cross-link is important for the catalase, but not the peroxidase activity of the enzyme.

The catalysed reaction is H2O2 + AH2 = A + 2 H2O. It catalyses the reaction 2 H2O2 = O2 + 2 H2O. In terms of biological role, bifunctional enzyme with both catalase and broad-spectrum peroxidase activity. The polypeptide is Catalase-peroxidase (Phenylobacterium zucineum (strain HLK1)).